Reading from the N-terminus, the 172-residue chain is MLFINITFACILAIRFYSLSISIRHEKALIAKGAIQYGKRNSTLLSIAHVAFYFAAIIEANKQNLSFNSTSQIGLAILIFAIAMLFYVIYELKEIWTVKIYILPEHQINRSFLFKYVRHPNYFLNIIPELIGLSLFCQAKYTALVGLPIYLLILAVRIKQEESAMSHLFPKS.

4 helical membrane passes run Met-1 to Ile-21, Asn-41 to Asn-61, Gln-72 to Leu-92, and Phe-136 to Val-156.

Its subcellular location is the cell membrane. This is an uncharacterized protein from Haemophilus influenzae (strain ATCC 51907 / DSM 11121 / KW20 / Rd).